The primary structure comprises 337 residues: Pyridoxal 5'-phosphate synthase subunit PdxS (337 aa).

D65 contacts D-ribose 5-phosphate. The active-site Schiff-base intermediate with D-ribose 5-phosphate is K122. G194 provides a ligand contact to D-ribose 5-phosphate. Residue K206 participates in D-glyceraldehyde 3-phosphate binding. D-ribose 5-phosphate contacts are provided by residues G255 and G276–S277.

It belongs to the PdxS/SNZ family. In the presence of PdxT, forms a dodecamer of heterodimers.

It carries out the reaction aldehydo-D-ribose 5-phosphate + D-glyceraldehyde 3-phosphate + L-glutamine = pyridoxal 5'-phosphate + L-glutamate + phosphate + 3 H2O + H(+). Its pathway is cofactor biosynthesis; pyridoxal 5'-phosphate biosynthesis. Its function is as follows. Catalyzes the formation of pyridoxal 5'-phosphate from ribose 5-phosphate (RBP), glyceraldehyde 3-phosphate (G3P) and ammonia. The ammonia is provided by the PdxT subunit. Can also use ribulose 5-phosphate and dihydroxyacetone phosphate as substrates, resulting from enzyme-catalyzed isomerization of RBP and G3P, respectively. This is Pyridoxal 5'-phosphate synthase subunit PdxS from Metallosphaera sedula (strain ATCC 51363 / DSM 5348 / JCM 9185 / NBRC 15509 / TH2).